A 341-amino-acid chain; its full sequence is MSVQEVVGDPRFFARSGPYDVAAVAEAVGASIPADCTLSLTGVAPLQIAGPSEVSFLDNRRYADALEQTRAGAVIIKADMVDRVPAGVIALVVPEPYLAWARVAALFYPLPPVQPGIHPSAVVDETACIDPSAQIGPLAVIEAGVEIGPDCRIAAHAVIGAGVKMGRSCRIGSHASLSHAILGDRVYVYPGVRIGQDGFGFAPSSEGFVTVPQLGRVVLENDVEVGANSTIDRGSMHDTVIGAGSRLDNLVMIAHNVRMGRACVIVSQVGISGSTTLGDHVVLAGQAGLIGHLKIGSGARIGAQAGVMADVPAGAEIVGSPAQPAKDFFRQIATLRRLARR.

Catalysis depends on His255, which acts as the Proton acceptor.

It belongs to the transferase hexapeptide repeat family. LpxD subfamily. As to quaternary structure, homotrimer.

The enzyme catalyses a UDP-3-O-[(3R)-3-hydroxyacyl]-alpha-D-glucosamine + a (3R)-hydroxyacyl-[ACP] = a UDP-2-N,3-O-bis[(3R)-3-hydroxyacyl]-alpha-D-glucosamine + holo-[ACP] + H(+). The protein operates within bacterial outer membrane biogenesis; LPS lipid A biosynthesis. Its function is as follows. Catalyzes the N-acylation of UDP-3-O-acylglucosamine using 3-hydroxyacyl-ACP as the acyl donor. Is involved in the biosynthesis of lipid A, a phosphorylated glycolipid that anchors the lipopolysaccharide to the outer membrane of the cell. The protein is UDP-3-O-acylglucosamine N-acyltransferase of Granulibacter bethesdensis (strain ATCC BAA-1260 / CGDNIH1).